The primary structure comprises 147 residues: HETDPDGQVMSSMIETLMFLQKEYANLRYAFMTVNNARSFGSGSERLYVSNKEIKTFEPLKEICEEAGGHIPSPQLENQNKAFASVLERHNKAAYLVVGDSANFTNWAAGQPNEADGTCVKADTHGSWHSASCDENLLVVCEFYFIL.

The 82-residue stretch at 62-143 folds into the C-type lectin domain; that stretch reads EICEEAGGHI…DENLLVVCEF (82 aa). Disulfide bonds link Cys-64–Cys-141 and Cys-119–Cys-133. N-linked (GlcNAc...) asparagine glycosylation occurs at Asn-103.

The protein belongs to the alpha-type phospholipase A2 inhibitor family. As to quaternary structure, homo- or heterotrimer; homotrimer of PLI-A chains, two PLI-A and one PLI-B chains, one PLI-A and two PLI-B chains, and homotrimer of PLI-B chains (with a ratio of 1:3:3:1). As to expression, expressed by the liver.

The protein resides in the secreted. In terms of biological role, PLI binds directly phospholipase A2 in the presence or absence of calcium. Inhibitory activity of the PLI-A homotrimer is more specific than that of the PLI-B homotrimer. This is Phospholipase A2 inhibitor subunit A from Protobothrops flavoviridis (Habu).